The chain runs to 97 residues: UPF0235 protein Ppha_2415 (97 aa).

Belongs to the UPF0235 family.

This chain is UPF0235 protein Ppha_2415, found in Pelodictyon phaeoclathratiforme (strain DSM 5477 / BU-1).